We begin with the raw amino-acid sequence, 277 residues long: Thiamine thiazole synthase (277 aa).

NAD(+) is bound by residues serine 36, glycine 63, valine 126, and 152–154 (HVD). Residues aspartate 154 and histidine 169 each coordinate Fe cation. Methionine 230 contacts NAD(+). Residue arginine 240 coordinates glycine.

Belongs to the THI4 family. As to quaternary structure, homooctamer; tetramer of dimers. Fe(2+) is required as a cofactor.

The enzyme catalyses hydrogen sulfide + glycine + NAD(+) = ADP-5-ethyl-4-methylthiazole-2-carboxylate + nicotinamide + 3 H2O + H(+). It participates in cofactor biosynthesis; thiamine diphosphate biosynthesis. In terms of biological role, involved in the biosynthesis of the thiazole moiety of thiamine. Catalyzes the conversion of NAD and glycine to adenosine diphosphate 5-(2-hydroxyethyl)-4-methylthiazole-2-carboxylate (ADT), an adenylated thiazole intermediate, using free sulfide as a source of sulfur. The sequence is that of Thiamine thiazole synthase from Fervidobacterium nodosum (strain ATCC 35602 / DSM 5306 / Rt17-B1).